The primary structure comprises 301 residues: Probable alpha-L-glutamate ligase 2 (301 aa).

The 184-residue stretch at 104 to 287 (MQLLSRKGIG…VASMIIEFIV (184 aa)) folds into the ATP-grasp domain. Residues Lys-141, 178–179 (EY), Asp-187, and 211–213 (RSN) contribute to the ATP site. Residues Asp-248, Glu-260, and Asn-262 each contribute to the Mg(2+) site. The Mn(2+) site is built by Asp-248, Glu-260, and Asn-262.

This sequence belongs to the RimK family. The cofactor is Mg(2+). Mn(2+) is required as a cofactor.

This Pseudoalteromonas atlantica (strain T6c / ATCC BAA-1087) protein is Probable alpha-L-glutamate ligase 2.